We begin with the raw amino-acid sequence, 319 residues long: Probable cystathionine gamma-synthase (319 aa).

The residue at position 197 (K197) is an N6-(pyridoxal phosphate)lysine.

This sequence belongs to the trans-sulfuration enzymes family. As to quaternary structure, homotetramer. The cofactor is pyridoxal 5'-phosphate.

It is found in the cytoplasm. It catalyses the reaction O-succinyl-L-homoserine + L-cysteine = L,L-cystathionine + succinate + H(+). Catalyzes the formation of L-cystathionine from O-succinyl-L-homoserine (OSHS) and L-cysteine, via a gamma-replacement reaction. In the absence of thiol, catalyzes gamma-elimination to form 2-oxobutanoate, succinate and ammonia. The polypeptide is Probable cystathionine gamma-synthase (metB) (Herpetosiphon aurantiacus (Herpetosiphon giganteus)).